A 142-amino-acid polypeptide reads, in one-letter code: Large ribosomal subunit protein uL11 (142 aa).

It belongs to the universal ribosomal protein uL11 family. In terms of assembly, part of the ribosomal stalk of the 50S ribosomal subunit. Interacts with L10 and the large rRNA to form the base of the stalk. L10 forms an elongated spine to which L12 dimers bind in a sequential fashion forming a multimeric L10(L12)X complex. In terms of processing, one or more lysine residues are methylated.

Its function is as follows. Forms part of the ribosomal stalk which helps the ribosome interact with GTP-bound translation factors. This Shewanella oneidensis (strain ATCC 700550 / JCM 31522 / CIP 106686 / LMG 19005 / NCIMB 14063 / MR-1) protein is Large ribosomal subunit protein uL11.